The chain runs to 388 residues: Protein DJ-1 homolog D (388 aa).

PfpI endopeptidase domains lie at Arg5–Gly190 and Lys198–Gly383. Residue Cys120 is the Nucleophile of the active site. Cysteine sulfenic acid (-SOH) is present on Cys120. The active site involves His121. Cys313 acts as the Nucleophile in catalysis. Cys313 carries the cysteine sulfinic acid (-SO2H) modification. His314 is an active-site residue.

The protein belongs to the peptidase C56 family. In terms of assembly, homotrimer. In terms of processing, cys-120 and Cys-313 are oxidized to sulfinic acid.

The catalysed reaction is (R)-S-lactoylglutathione = methylglyoxal + glutathione. Functionally, possesses glyoxalase I activity. Catalyzes the conversion of hemimercaptal, formed from methylglyoxal and glutathione, to S-lactoylglutathione. May be involved in oxidative stress response. The protein is Protein DJ-1 homolog D (DJ1D) of Arabidopsis thaliana (Mouse-ear cress).